The primary structure comprises 557 residues: Proline--tRNA ligase (557 aa).

This sequence belongs to the class-II aminoacyl-tRNA synthetase family. ProS type 1 subfamily. In terms of assembly, homodimer.

It is found in the cytoplasm. It carries out the reaction tRNA(Pro) + L-proline + ATP = L-prolyl-tRNA(Pro) + AMP + diphosphate. Catalyzes the attachment of proline to tRNA(Pro) in a two-step reaction: proline is first activated by ATP to form Pro-AMP and then transferred to the acceptor end of tRNA(Pro). As ProRS can inadvertently accommodate and process non-cognate amino acids such as alanine and cysteine, to avoid such errors it has two additional distinct editing activities against alanine. One activity is designated as 'pretransfer' editing and involves the tRNA(Pro)-independent hydrolysis of activated Ala-AMP. The other activity is designated 'posttransfer' editing and involves deacylation of mischarged Ala-tRNA(Pro). The misacylated Cys-tRNA(Pro) is not edited by ProRS. The chain is Proline--tRNA ligase from Baumannia cicadellinicola subsp. Homalodisca coagulata.